We begin with the raw amino-acid sequence, 553 residues long: Glutamate--tRNA ligase (553 aa).

The short motif at 103–113 (PNPSGPLHIGH) is the 'HIGH' region element.

This sequence belongs to the class-I aminoacyl-tRNA synthetase family. Glutamate--tRNA ligase type 2 subfamily.

It is found in the cytoplasm. It catalyses the reaction tRNA(Glu) + L-glutamate + ATP = L-glutamyl-tRNA(Glu) + AMP + diphosphate. Its function is as follows. Catalyzes the attachment of glutamate to tRNA(Glu) in a two-step reaction: glutamate is first activated by ATP to form Glu-AMP and then transferred to the acceptor end of tRNA(Glu). This is Glutamate--tRNA ligase from Methanothermobacter thermautotrophicus (strain ATCC 29096 / DSM 1053 / JCM 10044 / NBRC 100330 / Delta H) (Methanobacterium thermoautotrophicum).